A 317-amino-acid polypeptide reads, in one-letter code: Transaldolase (317 aa).

K126 serves as the catalytic Schiff-base intermediate with substrate.

Belongs to the transaldolase family. Type 1 subfamily. As to quaternary structure, homodimer.

The protein localises to the cytoplasm. It catalyses the reaction D-sedoheptulose 7-phosphate + D-glyceraldehyde 3-phosphate = D-erythrose 4-phosphate + beta-D-fructose 6-phosphate. The protein operates within carbohydrate degradation; pentose phosphate pathway; D-glyceraldehyde 3-phosphate and beta-D-fructose 6-phosphate from D-ribose 5-phosphate and D-xylulose 5-phosphate (non-oxidative stage): step 2/3. Transaldolase is important for the balance of metabolites in the pentose-phosphate pathway. This chain is Transaldolase, found in Burkholderia orbicola (strain AU 1054).